A 366-amino-acid chain; its full sequence is Peptide chain release factor 2 (366 aa).

Q251 is subject to N5-methylglutamine.

It belongs to the prokaryotic/mitochondrial release factor family. Post-translationally, methylated by PrmC. Methylation increases the termination efficiency of RF2.

It is found in the cytoplasm. Functionally, peptide chain release factor 2 directs the termination of translation in response to the peptide chain termination codons UGA and UAA. In Campylobacter concisus (strain 13826), this protein is Peptide chain release factor 2.